Here is a 167-residue protein sequence, read N- to C-terminus: Transcriptional repressor NrdR (167 aa).

The segment at 3–34 (CPFCRNPDSRVVDSRMADDGSAIRRRRQCPEC) is a zinc-finger region. The ATP-cone domain occupies 46-136 (LSVIKRSGVG…VYQAFESLED (91 aa)). The interval 148 to 167 (AQEDAAERPATPRKPEKTSL) is disordered.

The protein belongs to the NrdR family. Zn(2+) serves as cofactor.

Negatively regulates transcription of bacterial ribonucleotide reductase nrd genes and operons by binding to NrdR-boxes. The chain is Transcriptional repressor NrdR from Pseudarthrobacter chlorophenolicus (strain ATCC 700700 / DSM 12829 / CIP 107037 / JCM 12360 / KCTC 9906 / NCIMB 13794 / A6) (Arthrobacter chlorophenolicus).